The chain runs to 490 residues: Cytochrome P450 2C12, female-specific (490 aa).

C435 provides a ligand contact to heme.

The protein belongs to the cytochrome P450 family. Heme serves as cofactor.

It localises to the endoplasmic reticulum membrane. The protein localises to the microsome membrane. It carries out the reaction an organic molecule + reduced [NADPH--hemoprotein reductase] + O2 = an alcohol + oxidized [NADPH--hemoprotein reductase] + H2O + H(+). In terms of biological role, this P450 is active in 15-beta-hydroxylation of steroid sulfates. In Rattus norvegicus (Rat), this protein is Cytochrome P450 2C12, female-specific (Cyp2c12).